A 407-amino-acid chain; its full sequence is Phosphoglycerate kinase (407 aa).

Substrate-binding positions include 21-23 (DLN), Arg-36, 59-62 (HQGR), Arg-116, and Arg-156. Residues Glu-332 and 358–361 (GGDT) contribute to the ATP site.

It belongs to the phosphoglycerate kinase family. In terms of assembly, monomer.

The protein localises to the cytoplasm. The enzyme catalyses (2R)-3-phosphoglycerate + ATP = (2R)-3-phospho-glyceroyl phosphate + ADP. It functions in the pathway carbohydrate degradation; glycolysis; pyruvate from D-glyceraldehyde 3-phosphate: step 2/5. In Halorubrum lacusprofundi (strain ATCC 49239 / DSM 5036 / JCM 8891 / ACAM 34), this protein is Phosphoglycerate kinase.